The sequence spans 517 residues: B3 domain-containing protein REM1 (517 aa).

The segment at residues F7 to S92 is a DNA-binding region (TF-B3 1). Residues D115–I140 show a composition bias toward acidic residues. A disordered region spans residues D115 to D158. Positions I143–S157 are enriched in basic and acidic residues. 2 consecutive DNA-binding regions (TF-B3) follow at residues F162 to E259 and F285 to K385. Residues G393–K415 form a disordered region.

Expressed in the shoot apical meristem (SAM), in the inflorescence apex and flowers.

It is found in the nucleus. Functionally, may play a role in flower development. This is B3 domain-containing protein REM1 (REM1) from Arabidopsis thaliana (Mouse-ear cress).